A 114-amino-acid chain; its full sequence is T cell receptor beta variable 6-9 (114 aa).

Residues 1–21 (MSIGLLCCVAFSLLWAGPVNA) form the signal peptide. The Ig-like domain occupies 22–114 (GVTQTPKFHI…TSVYFCASSY (93 aa)). Residues C42 and C110 are joined by a disulfide bond. N84 is a glycosylation site (N-linked (GlcNAc...) asparagine).

Alpha-beta TR is a heterodimer composed of an alpha and beta chain; disulfide-linked. The alpha-beta TR is associated with the transmembrane signaling CD3 coreceptor proteins to form the TR-CD3 (TcR or TCR). The assembly of alpha-beta TR heterodimers with CD3 occurs in the endoplasmic reticulum where a single alpha-beta TR heterodimer associates with one CD3D-CD3E heterodimer, one CD3G-CD3E heterodimer and one CD247 homodimer forming a stable octameric structure. CD3D-CD3E and CD3G-CD3E heterodimers preferentially associate with TR alpha and TR beta chains, respectively. The association of the CD247 homodimer is the last step of TcR assembly in the endoplasmic reticulum and is required for transport to the cell surface.

It is found in the cell membrane. Its function is as follows. V region of the variable domain of T cell receptor (TR) beta chain that participates in the antigen recognition. Alpha-beta T cell receptors are antigen specific receptors which are essential to the immune response and are present on the cell surface of T lymphocytes. Recognize peptide-major histocompatibility (MH) (pMH) complexes that are displayed by antigen presenting cells (APC), a prerequisite for efficient T cell adaptive immunity against pathogens. Binding of alpha-beta TR to pMH complex initiates TR-CD3 clustering on the cell surface and intracellular activation of LCK that phosphorylates the ITAM motifs of CD3G, CD3D, CD3E and CD247 enabling the recruitment of ZAP70. In turn ZAP70 phosphorylates LAT, which recruits numerous signaling molecules to form the LAT signalosome. The LAT signalosome propagates signal branching to three major signaling pathways, the calcium, the mitogen-activated protein kinase (MAPK) kinase and the nuclear factor NF-kappa-B (NF-kB) pathways, leading to the mobilization of transcription factors that are critical for gene expression and essential for T cell growth and differentiation. The T cell repertoire is generated in the thymus, by V-(D)-J rearrangement. This repertoire is then shaped by intrathymic selection events to generate a peripheral T cell pool of self-MH restricted, non-autoaggressive T cells. Post-thymic interaction of alpha-beta TR with the pMH complexes shapes TR structural and functional avidity. This is T cell receptor beta variable 6-9 from Homo sapiens (Human).